The sequence spans 201 residues: Recombination protein RecR (201 aa).

The C4-type zinc-finger motif lies at 60–75 (CSRCGNVDTVDPCTVC). Residues 83-178 (SVIIVVEDVS…KITRLAHGVP (96 aa)) form the Toprim domain.

Belongs to the RecR family.

Its function is as follows. May play a role in DNA repair. It seems to be involved in an RecBC-independent recombinational process of DNA repair. It may act with RecF and RecO. This is Recombination protein RecR from Rhizobium etli (strain CIAT 652).